A 447-amino-acid chain; its full sequence is N-succinylarginine dihydrolase (447 aa).

Substrate contacts are provided by residues 19–28 (AGLSFGNEAS), Asn-110, and 137–138 (HR). Glu-174 is an active-site residue. Arg-213 provides a ligand contact to substrate. His-249 is a catalytic residue. Asp-251 and Asn-364 together coordinate substrate. Cys-370 functions as the Nucleophile in the catalytic mechanism.

This sequence belongs to the succinylarginine dihydrolase family. As to quaternary structure, homodimer.

The catalysed reaction is N(2)-succinyl-L-arginine + 2 H2O + 2 H(+) = N(2)-succinyl-L-ornithine + 2 NH4(+) + CO2. Its pathway is amino-acid degradation; L-arginine degradation via AST pathway; L-glutamate and succinate from L-arginine: step 2/5. Its function is as follows. Catalyzes the hydrolysis of N(2)-succinylarginine into N(2)-succinylornithine, ammonia and CO(2). This is N-succinylarginine dihydrolase from Yersinia enterocolitica serotype O:8 / biotype 1B (strain NCTC 13174 / 8081).